The primary structure comprises 310 residues: Lipoyl synthase (310 aa).

The [4Fe-4S] cluster site is built by C45, C50, C56, C71, C75, C78, and S285. The region spanning W57–L274 is the Radical SAM core domain.

Belongs to the radical SAM superfamily. Lipoyl synthase family. It depends on [4Fe-4S] cluster as a cofactor.

The protein localises to the cytoplasm. It carries out the reaction [[Fe-S] cluster scaffold protein carrying a second [4Fe-4S](2+) cluster] + N(6)-octanoyl-L-lysyl-[protein] + 2 oxidized [2Fe-2S]-[ferredoxin] + 2 S-adenosyl-L-methionine + 4 H(+) = [[Fe-S] cluster scaffold protein] + N(6)-[(R)-dihydrolipoyl]-L-lysyl-[protein] + 4 Fe(3+) + 2 hydrogen sulfide + 2 5'-deoxyadenosine + 2 L-methionine + 2 reduced [2Fe-2S]-[ferredoxin]. It functions in the pathway protein modification; protein lipoylation via endogenous pathway; protein N(6)-(lipoyl)lysine from octanoyl-[acyl-carrier-protein]: step 2/2. Catalyzes the radical-mediated insertion of two sulfur atoms into the C-6 and C-8 positions of the octanoyl moiety bound to the lipoyl domains of lipoate-dependent enzymes, thereby converting the octanoylated domains into lipoylated derivatives. In Novosphingobium aromaticivorans (strain ATCC 700278 / DSM 12444 / CCUG 56034 / CIP 105152 / NBRC 16084 / F199), this protein is Lipoyl synthase.